The following is a 341-amino-acid chain: 4-(gamma-L-glutamylamino)butanoyl-[BtrI acyl-carrier protein] monooxygenase BtrO (341 aa).

This sequence belongs to the bacterial luciferase oxidoreductase family.

The catalysed reaction is 4-(gamma-L-glutamylamino)butanoyl-[BtrI ACP] + FMNH2 + O2 = 4-(gamma-L-glutamylamino)-(2S)-2-hydroxybutanoyl-[BtrI ACP] + FMN + H2O + H(+). It participates in antibiotic biosynthesis; butirosin biosynthesis. Its function is as follows. Monooxygenase component of a two-component system involved in the biosynthesis of the side chain of the aminoglycoside antibiotics in the biosynthetic pathway of butirosin. Together with BtrV, mediates hydroxylation of gamma-L-Glu-GABA-S-BtrI. Not able to hydroxylate free substrates, activation by the acyl-carrier protein is mandatory. Octanoyl-S-[BtrI acyl-carrier protein] is also accepted as substrate. The protein is 4-(gamma-L-glutamylamino)butanoyl-[BtrI acyl-carrier protein] monooxygenase BtrO (btrO) of Niallia circulans (Bacillus circulans).